The following is a 341-amino-acid chain: Serpentine receptor class epsilon-8 (341 aa).

The next 7 membrane-spanning stretches (helical) occupy residues 37-57, 64-86, 101-123, 143-163, 169-189, 235-255, and 264-284; these read VGFL…FIFI, LTFL…CIIV, WILV…LPIF, IWVS…SAIA, IPVV…YIGI, VQIS…MDHF, and WSYV…PIIL.

It belongs to the nematode receptor-like protein sre family.

Its subcellular location is the membrane. The sequence is that of Serpentine receptor class epsilon-8 (sre-8) from Caenorhabditis elegans.